Here is a 301-residue protein sequence, read N- to C-terminus: MGSNAVPSLWYWVVGEDQESGRATWWAHTELNWGTDKQKQFVENQLGFKDDSNSDSKNSNLKAQGLTQPAYLIAGLDVVADHLVFAAFKAGAVGYDMSTENSAATKDQALAWSTTAGLDSAGGYKALVENTAGLNGPINGLFTLLDSFAYVTPVSGMKGGSQNNEEVQTKYPVKDDSKASAKIASLINASPLNSYGDDGVTVFDALGLNFNFKLNEARLPSRTDQLLVYGIVNESELKSARENAQSTSDANSNTKVKWTNTASHYLPVPYYYSANFPEVGNRRRAEQRNGVITIKRPSTQR.

It belongs to the MgpC family.

The protein is Putative MgpC-like protein MPN_093 of Mycoplasma pneumoniae (strain ATCC 29342 / M129 / Subtype 1) (Mycoplasmoides pneumoniae).